The primary structure comprises 404 residues: Arginine biosynthesis bifunctional protein ArgJ (404 aa).

6 residues coordinate substrate: Thr166, Lys189, Thr200, Glu280, Asn399, and Ser404. Thr200 serves as the catalytic Nucleophile.

This sequence belongs to the ArgJ family. In terms of assembly, heterotetramer of two alpha and two beta chains.

It is found in the cytoplasm. The catalysed reaction is N(2)-acetyl-L-ornithine + L-glutamate = N-acetyl-L-glutamate + L-ornithine. It catalyses the reaction L-glutamate + acetyl-CoA = N-acetyl-L-glutamate + CoA + H(+). It participates in amino-acid biosynthesis; L-arginine biosynthesis; L-ornithine and N-acetyl-L-glutamate from L-glutamate and N(2)-acetyl-L-ornithine (cyclic): step 1/1. The protein operates within amino-acid biosynthesis; L-arginine biosynthesis; N(2)-acetyl-L-ornithine from L-glutamate: step 1/4. Its function is as follows. Catalyzes two activities which are involved in the cyclic version of arginine biosynthesis: the synthesis of N-acetylglutamate from glutamate and acetyl-CoA as the acetyl donor, and of ornithine by transacetylation between N(2)-acetylornithine and glutamate. This is Arginine biosynthesis bifunctional protein ArgJ from Mycolicibacterium paratuberculosis (strain ATCC BAA-968 / K-10) (Mycobacterium paratuberculosis).